Reading from the N-terminus, the 725-residue chain is Rab-like protein 6 (725 aa).

M1 carries the N-acetylmethionine modification. The small GTPase-like stretch occupies residues 39-279 (GVQYNMKIVI…IFLEMMEARS (241 aa)). Residues 50 to 57 (GDRNTGKT), 100 to 104 (DVVDK), and 177 to 179 (YRD) each bind GTP. 2 disordered regions span residues 281–364 (GHAS…PAPA) and 378–725 (PAAE…YEEL). Low complexity-rich tracts occupy residues 291–325 (QSPSSGSQSPVVPPSAVSTGSSSPSTPQPAPQLSL) and 343–353 (AMPSSVHSSAP). Residues 410 to 427 (GLDRSFLEDTSVPKDKKV) are compositionally biased toward basic and acidic residues. Phosphoserine occurs at positions 414, 436, 438, 480, 482, 483, and 502. A compositionally biased stretch (polar residues) spans 499 to 514 (QQCSEPETKWSSTKVS). Over residues 537–549 (DSERPQEGKDKQV) the composition is skewed to basic and acidic residues. A compositionally biased stretch (acidic residues) spans 569 to 578 (DDPDFESDES). Phosphoserine occurs at positions 575 and 594. At T597 the chain carries Phosphothreonine. Basic and acidic residues predominate over residues 632 to 649 (MGPKESSDEDRDSKLPSK). 3 positions are modified to phosphoserine: S637, S638, and S644. The tract at residues 652 to 690 (KKKKKKSKEEEEKTTKKKSKHKKSKDKEEGKEDRKKKRK) is interaction with CDKN2A. The segment covering 666–675 (TKKKSKHKKS) has biased composition (basic residues). The span at 707 to 725 (LGGGAPGSRHPGGGDYEEL) shows a compositional bias: gly residues.

It belongs to the small GTPase superfamily. Rab family.

It is found in the nucleus. The protein localises to the cytoplasm. May enhance cellular proliferation. May reduce growth inhibitory activity of CDKN2A. This is Rab-like protein 6 (Rabl6) from Mus musculus (Mouse).